A 1025-amino-acid polypeptide reads, in one-letter code: Multidrug resistance protein MdtC (1025 aa).

Helical transmembrane passes span 3–23 (FFAL…AITL), 333–353 (EVEQ…FLFL), 360–380 (IIPA…MYLC), 387–407 (LSLM…IVVL), 431–451 (VGFT…PLLL), 463–483 (FAVT…TLTP), 528–548 (LVGV…ISIP), 853–873 (VILI…LYES), 875–895 (VHPL…LLAL), 897–917 (LFNA…IGIV), 953–973 (PIMM…LSGG), and 984–1004 (ITIV…TPVV).

The protein belongs to the resistance-nodulation-cell division (RND) (TC 2.A.6) family. MdtC subfamily. Part of a tripartite efflux system composed of MdtA, MdtB and MdtC. MdtC forms a heteromultimer with MdtB.

It localises to the cell inner membrane. The MdtABC tripartite complex confers resistance against novobiocin and deoxycholate. The protein is Multidrug resistance protein MdtC of Escherichia coli O17:K52:H18 (strain UMN026 / ExPEC).